The sequence spans 211 residues: Major fimbrial subunit (211 aa).

Residues methionine 1–alanine 20 form the signal peptide. Cysteine 43 and cysteine 83 form a disulfide bridge.

Belongs to the fimbrial protein family.

It is found in the fimbrium. Mediates adherence to oropharyngeal epithelial cells. Helps the airway colonization process. This chain is Major fimbrial subunit (hifA), found in Haemophilus influenzae.